Consider the following 481-residue polypeptide: Dynein axonemal assembly factor 8 (481 aa).

4 disordered regions span residues 70–91 (DESG…LVPG), 131–233 (LDTK…EGRP), 306–397 (TWKV…PVAS), and 415–454 (RAFR…KKHI). Phosphoserine is present on residues Ser-83, Ser-145, and Ser-147. Residues 144-155 (GSQSPPWSSQGE) show a composition bias toward polar residues. A compositionally biased stretch (basic and acidic residues) spans 163–176 (GKLKTEPSDTDFKN). Residues 177–188 (SAKRRALRRERR) show a composition bias toward basic residues. Residues 198–211 (KVTQAAQNPASGDQ) show a composition bias toward polar residues. The span at 310-322 (SADKLQDTEEQVA) shows a compositional bias: basic and acidic residues. Residues 323-336 (RTRSASAESGFQTE) are compositionally biased toward polar residues. Ser-328 is modified (phosphoserine). 2 stretches are compositionally biased toward basic and acidic residues: residues 337–349 (RVQK…RLKT) and 359–380 (RLTE…HSSS).

The protein localises to the dynein axonemal particle. It is found in the cytoplasm. Functionally, in cyliated cells, dynein axonemal particle-specific protein required for deployment of ODA to the axoneme. Interacts with outer dynein arm (ODA) subunits. The protein is Dynein axonemal assembly factor 8 (Dnaaf8) of Rattus norvegicus (Rat).